We begin with the raw amino-acid sequence, 466 residues long: MTLNLYDTLSRRIVTLDCRDRVELYVCGPTVQSPPHIGHMRSGVVYDCLRRWLEYKGLPVLYVRNITDIDDKILASARSTETGETWWQIAYRVSGLFNEAYKALFVKPPDYEPLVTAHIPDIIKAIEILIQKNVAYRAMDGSGNVFFSIDKHPSYGELTDQKDLLIDDCITPGKRDPRDFTLWKEKKDTDPDLAFWESPWGPGRPGWHIECSVMATKYLGTRFAIHGGGVDLRFPHHENELAQARALGAHFADIWMHTGAVNVEGIKMSKSFGNSVLVQDALSKVSPSALRYYFLTAHYRSTLNYTENSLSQACNTWNKLQGCIYRVYDYLEREGYENDFCVSQLNTDFSTSLDNDLNIPEALAIVHNKVREMNRLVDTQADMQYLGNTLSEVVEMLSILCPIDHKITYTSGAQDNSKALLQVLLEARDRARSKGDFYTSDLLRELLAEADISVSDGHVSYGSPRG.

Position 27 (C27) interacts with Zn(2+). The 'HIGH' region motif lies at 29 to 39 (PTVQSPPHIGH). Zn(2+) is bound by residues C211, H236, and E240. The 'KMSKS' region motif lies at 267–271 (KMSKS). Position 270 (K270) interacts with ATP.

It belongs to the class-I aminoacyl-tRNA synthetase family. Monomer. Requires Zn(2+) as cofactor.

It localises to the cytoplasm. It catalyses the reaction tRNA(Cys) + L-cysteine + ATP = L-cysteinyl-tRNA(Cys) + AMP + diphosphate. The chain is Cysteine--tRNA ligase 1 from Tropheryma whipplei (strain TW08/27) (Whipple's bacillus).